Consider the following 199-residue polypeptide: Lysine exporter LysE (199 aa).

A run of 5 helical transmembrane segments spans residues 6-26 (VVGF…NAFV), 42-62 (LCTV…GALI), 68-88 (ALNV…LLAA), 144-164 (WLFG…LGFG), and 178-198 (WRIL…SLTV).

The protein belongs to the LysE/ArgO transporter (TC 2.A.75) family.

The protein localises to the cell inner membrane. Functionally, catalyzes the efflux of L-lysine. The chain is Lysine exporter LysE from Mycobacterium bovis (strain ATCC BAA-935 / AF2122/97).